A 191-amino-acid chain; its full sequence is Elongation factor P (191 aa).

Position 34 is an N6-(3,6-diaminohexanoyl)-5-hydroxylysine (K34).

This sequence belongs to the elongation factor P family. In terms of processing, may be beta-lysylated on the epsilon-amino group of Lys-34 by the combined action of EpmA and EpmB, and then hydroxylated on the C5 position of the same residue by EpmC (if this protein is present). Lysylation is critical for the stimulatory effect of EF-P on peptide-bond formation. The lysylation moiety may extend toward the peptidyltransferase center and stabilize the terminal 3-CCA end of the tRNA. Hydroxylation of the C5 position on Lys-34 may allow additional potential stabilizing hydrogen-bond interactions with the P-tRNA.

The protein localises to the cytoplasm. It functions in the pathway protein biosynthesis; polypeptide chain elongation. Its function is as follows. Involved in peptide bond synthesis. Alleviates ribosome stalling that occurs when 3 or more consecutive Pro residues or the sequence PPG is present in a protein, possibly by augmenting the peptidyl transferase activity of the ribosome. Modification of Lys-34 is required for alleviation. The chain is Elongation factor P from Marinomonas sp. (strain MWYL1).